We begin with the raw amino-acid sequence, 423 residues long: Phaseolin (423 aa).

The N-terminal stretch at 1 to 21 (RRVPLLLLGILFLASLSASFA) is a signal peptide. N-linked (GlcNAc...) asparagine glycosylation occurs at asparagine 28. 2 Cupin type-1 domains span residues 35–193 (FYFS…EKIN) and 228–383 (KSLD…EDVQ). Residues asparagine 243, asparagine 332, asparagine 390, and asparagine 396 are each glycosylated (N-linked (GlcNAc...) asparagine). Residues 397–423 (GSYHKNAHPHEQEQQKQQKGRKGAFVY) are disordered. Residues 414-423 (QKGRKGAFVY) are compositionally biased toward basic residues.

This sequence belongs to the 7S seed storage protein family. As to quaternary structure, homotrimer.

Its subcellular location is the vacuole. The protein localises to the aleurone grain. In terms of biological role, major seed storage protein. In Phaseolus lunatus (Lima bean), this protein is Phaseolin (PHS).